We begin with the raw amino-acid sequence, 432 residues long: Hexane cyclase pydB (432 aa).

Residues Met-1–Ala-20 form the signal peptide. Residues Asn-59, Asn-78, Asn-153, and Asn-308 are each glycosylated (N-linked (GlcNAc...) asparagine).

It belongs to the Diels-Alderase family.

The protein operates within mycotoxin biosynthesis. Functionally, hexane cyclase; part of the gene cluster that mediates the biosynthesis of pyrrocidines, fungal natural products containing a macrocyclic para-cyclophane connected to a decahydrofluorene ring system that show potent antibiotic activities toward Gram-negative bacteria. Within the pathway, pydB functions synergistically with pydE, pydX and pydZ to form the cyclophane. The pathway begins with the PKS-NRPS pydA which, with the help of the trans-enoyl reductase pydC, synthesizes the polyketide-tyrosyl acyl thioester product which can be reductively off-loaded by the terminal reductase (R) domain in pydA. The alpha/beta hydrolase pydG is then required to catalyze the subsequent Knoevenagel condensation that affords the 3-pyrrolin-2-one ring, whereas the four proteins pydB, pydE, pydX and pydZ then function synergistically to form the cyclophane. PydB and the membrane-bound pydX and pydZ are lipid-binding proteins that can sequester and mold the pdyG product into the inverse S-shape. Binding of the medium chain reductase pydE to the complex would trigger the cascade oxidative cyclization. PydY is involved the Diels-Alder cycloaddition that forms the decahydrofluorene core. Additional non-enzymatic hydroxylation yields pyrrocidine A2 which can be further reduced into pyrrocidine B by an endogenous reductase. The protein is Hexane cyclase pydB of Acremonium sp.